The primary structure comprises 375 residues: Anhydro-N-acetylmuramic acid kinase (375 aa).

13–20 serves as a coordination point for ATP; it reads GTSMDGVD.

This sequence belongs to the anhydro-N-acetylmuramic acid kinase family.

The enzyme catalyses 1,6-anhydro-N-acetyl-beta-muramate + ATP + H2O = N-acetyl-D-muramate 6-phosphate + ADP + H(+). It participates in amino-sugar metabolism; 1,6-anhydro-N-acetylmuramate degradation. It functions in the pathway cell wall biogenesis; peptidoglycan recycling. Catalyzes the specific phosphorylation of 1,6-anhydro-N-acetylmuramic acid (anhMurNAc) with the simultaneous cleavage of the 1,6-anhydro ring, generating MurNAc-6-P. Is required for the utilization of anhMurNAc either imported from the medium or derived from its own cell wall murein, and thus plays a role in cell wall recycling. This Pelagibacter ubique (strain HTCC1062) protein is Anhydro-N-acetylmuramic acid kinase.